The sequence spans 547 residues: Chaperonin GroEL (547 aa).

ATP-binding positions include 30–33, Lys-51, 87–91, Gly-415, and Asp-496; these read TLGP and DGTTT. Positions 527–547 are disordered; the sequence is ENTPDMPAMPPGGMGGMGGMY. Positions 538-547 are enriched in gly residues; it reads GGMGGMGGMY.

The protein belongs to the chaperonin (HSP60) family. Forms a cylinder of 14 subunits composed of two heptameric rings stacked back-to-back. Interacts with the co-chaperonin GroES.

The protein localises to the cytoplasm. It carries out the reaction ATP + H2O + a folded polypeptide = ADP + phosphate + an unfolded polypeptide.. Together with its co-chaperonin GroES, plays an essential role in assisting protein folding. The GroEL-GroES system forms a nano-cage that allows encapsulation of the non-native substrate proteins and provides a physical environment optimized to promote and accelerate protein folding. The protein is Chaperonin GroEL of Chlorobium phaeovibrioides (strain DSM 265 / 1930) (Prosthecochloris vibrioformis (strain DSM 265)).